The primary structure comprises 371 residues: Chaperone protein DnaJ (371 aa).

The J domain maps to 5-69; that stretch reads DYYEVLGLSK…QKRAQYDQFG (65 aa). A CR-type zinc finger spans residues 133–215; it reads GKELNVEIPV…CHGSGKVRKR (83 aa). Residues Cys146, Cys149, Cys163, Cys166, Cys189, Cys192, Cys203, and Cys206 each contribute to the Zn(2+) site. CXXCXGXG motif repeat units follow at residues 146 to 153, 163 to 170, 189 to 196, and 203 to 210; these read CDTCKGSG, CKHCSGSG, CSHCSGTG, and CTTCHGSG.

It belongs to the DnaJ family. In terms of assembly, homodimer. Requires Zn(2+) as cofactor.

The protein localises to the cytoplasm. Functionally, participates actively in the response to hyperosmotic and heat shock by preventing the aggregation of stress-denatured proteins and by disaggregating proteins, also in an autonomous, DnaK-independent fashion. Unfolded proteins bind initially to DnaJ; upon interaction with the DnaJ-bound protein, DnaK hydrolyzes its bound ATP, resulting in the formation of a stable complex. GrpE releases ADP from DnaK; ATP binding to DnaK triggers the release of the substrate protein, thus completing the reaction cycle. Several rounds of ATP-dependent interactions between DnaJ, DnaK and GrpE are required for fully efficient folding. Also involved, together with DnaK and GrpE, in the DNA replication of plasmids through activation of initiation proteins. The chain is Chaperone protein DnaJ from Bacillus anthracis (strain A0248).